We begin with the raw amino-acid sequence, 105 residues long: MSKIKKGDDVIVIAGKDKGKRGTVLRVMKPDLVVVEGVNRLKKHQRPNPNKGDTGGIVEMDSPIQVSNIAIYNPATRKADRIGFKTVEGKGKARCFRSNEELIDA.

It belongs to the universal ribosomal protein uL24 family. As to quaternary structure, part of the 50S ribosomal subunit.

One of two assembly initiator proteins, it binds directly to the 5'-end of the 23S rRNA, where it nucleates assembly of the 50S subunit. In terms of biological role, one of the proteins that surrounds the polypeptide exit tunnel on the outside of the subunit. The chain is Large ribosomal subunit protein uL24 from Nitrosospira multiformis (strain ATCC 25196 / NCIMB 11849 / C 71).